Here is a 500-residue protein sequence, read N- to C-terminus: Probable cytosol aminopeptidase (500 aa).

2 residues coordinate Mn(2+): Lys-269 and Asp-274. Residue Lys-281 is part of the active site. The Mn(2+) site is built by Asp-292, Asp-351, and Glu-353. Residue Arg-355 is part of the active site.

This sequence belongs to the peptidase M17 family. It depends on Mn(2+) as a cofactor.

The protein resides in the cytoplasm. The enzyme catalyses Release of an N-terminal amino acid, Xaa-|-Yaa-, in which Xaa is preferably Leu, but may be other amino acids including Pro although not Arg or Lys, and Yaa may be Pro. Amino acid amides and methyl esters are also readily hydrolyzed, but rates on arylamides are exceedingly low.. It carries out the reaction Release of an N-terminal amino acid, preferentially leucine, but not glutamic or aspartic acids.. Its function is as follows. Presumably involved in the processing and regular turnover of intracellular proteins. Catalyzes the removal of unsubstituted N-terminal amino acids from various peptides. The chain is Probable cytosol aminopeptidase from Acidithiobacillus ferrooxidans (strain ATCC 23270 / DSM 14882 / CIP 104768 / NCIMB 8455) (Ferrobacillus ferrooxidans (strain ATCC 23270)).